We begin with the raw amino-acid sequence, 144 residues long: Flagellar assembly factor FliW (144 aa).

This sequence belongs to the FliW family. In terms of assembly, monomer. One copy interacts with the each alpha-helical wing of the CsrA homodimer, yielding a FliW-CsrA(2)-FliW complex. Comparison with a CsrA-mRNA structure (2JPP) suggests CsrA cannot bind both mRNA and FliW at the same time. Interacts with flagellin.

It is found in the cytoplasm. Acts as an anti-CsrA protein, binds CsrA and prevents it from repressing translation of its target genes, one of which is flagellin. Binds to flagellin and participates in the assembly of the flagellum. Functionally, allosterically inhibits CsrA binding to mRNA in a non-competitive fashion by preventing CsrA binding to the 5'-UTR. This Geobacillus thermodenitrificans (strain NG80-2) protein is Flagellar assembly factor FliW.